The chain runs to 405 residues: ATP-sensitive inward rectifier potassium channel 15 (405 aa).

Residues 1-90 lie on the Cytoplasmic side of the membrane; that stretch reads MVARWVKGSE…LQDLWTTVID (90 aa). Residues 91-117 form a helical membrane-spanning segment; it reads MKWRYKLTLFAATFVMTWFLFGVVYYA. At 118–143 the chain is on the extracellular side; that stretch reads IAFIHGDLELGESNSNHTPCIMKVDS. The helical; Pore-forming intramembrane region spans 144-160; sequence LTGAFLFSLESQTTIGY. Residues 157-162 carry the Selectivity filter motif; it reads TIGYGV. Topologically, residues 161–169 are extracellular; sequence GVRSITEEC. A helical membrane pass occupies residues 170–195; that stretch reads PHAIFLLVAQLVITTLIEIFITGTFL. The Cytoplasmic portion of the chain corresponds to 196–405; sequence AKIARPKKRA…RSLLLQQSNV (210 aa).

Belongs to the inward rectifier-type potassium channel (TC 1.A.2.1) family. KCNJ15 subfamily. As to quaternary structure, can form heteromultimeric channels with Kir5.1/KCNJ16. Interacts with PATJ.

It is found in the membrane. The protein resides in the cell membrane. It carries out the reaction K(+)(in) = K(+)(out). Its activity is regulated as follows. Channel activity is regulated by variations of cytosolic pH; reversibly inhibited by acidic pH values. Inhibited by Ba(2+) and Cs(+) in a voltage-dependent manner. Its function is as follows. Inward rectifier potassium channels are characterized by a greater tendency to allow potassium to flow into the cell rather than out of it. Their voltage dependence is regulated by the concentration of extracellular potassium; as external potassium is raised, the voltage range of the channel opening shifts to more positive voltages. The inward rectification is mainly due to the blockage of outward current by internal magnesium. The polypeptide is ATP-sensitive inward rectifier potassium channel 15 (Kcnj15) (Rattus norvegicus (Rat)).